The primary structure comprises 115 residues: MSMDNLVRIIEKDQIKDVPEFRPGDTVKVYVRFKEGNKERTQAFEGIVISMRGSGISKTFTVRRIGANGIGVERIFPLYAPIIEKIEVVRRGKVRRAKLYYLREVRGKVKIKERR.

This sequence belongs to the bacterial ribosomal protein bL19 family.

This protein is located at the 30S-50S ribosomal subunit interface and may play a role in the structure and function of the aminoacyl-tRNA binding site. The sequence is that of Large ribosomal subunit protein bL19 from Thermosipho africanus (strain TCF52B).